The following is a 126-amino-acid chain: Glycine cleavage system H protein (126 aa).

Residues 23 to 105 (AATVGITDHA…YGEGWLLRVR (83 aa)) form the Lipoyl-binding domain. Position 64 is an N6-lipoyllysine (Lys-64).

This sequence belongs to the GcvH family. The glycine cleavage system is composed of four proteins: P, T, L and H. The cofactor is (R)-lipoate.

In terms of biological role, the glycine cleavage system catalyzes the degradation of glycine. The H protein shuttles the methylamine group of glycine from the P protein to the T protein. This Rubrobacter xylanophilus (strain DSM 9941 / JCM 11954 / NBRC 16129 / PRD-1) protein is Glycine cleavage system H protein.